The sequence spans 129 residues: Large ribosomal subunit protein bL17 (129 aa).

The protein belongs to the bacterial ribosomal protein bL17 family. In terms of assembly, part of the 50S ribosomal subunit. Contacts protein L32.

The polypeptide is Large ribosomal subunit protein bL17 (Pasteurella multocida (strain Pm70)).